The following is a 459-amino-acid chain: Periodic tryptophan protein 1 homolog (459 aa).

Residues 44-84 (GDTQQELDEESDDDAEEGENAEEDQNDMDVDDHADANSENR) form a disordered region. The segment covering 48-73 (QELDEESDDDAEEGENAEEDQNDMDV) has biased composition (acidic residues). A compositionally biased stretch (basic and acidic residues) spans 74 to 84 (DDHADANSENR). WD repeat units follow at residues 168 to 214 (LLPS…AIEP), 232 to 272 (GHKD…PHTT), 275 to 315 (AFGK…GVNS), 321 to 361 (KVDG…QLLW), and 365 to 405 (AHNE…AKHV). Ser-385 carries the post-translational modification Phosphoserine.

It belongs to the WD repeat PWP1 family. As to quaternary structure, interacts with Mybbp1A. Phosphorylated in response to nutrient-activated TORC1 signaling. As to expression, detected in the germline of adult testis and ovary (at protein level). Detected in ovary somatic cells, in zfh1-positive cyst cells in the testis and absent in differentiated cyst cells (at protein level).

The protein localises to the nucleus. The protein resides in the nucleolus. Its subcellular location is the chromosome. It is found in the nucleoplasm. Its function is as follows. Chromatin-associated factor that regulates transcription. Regulates Pol I-mediated rRNA biogenesis and, probably, Pol III-mediated transcription. Regulates the localization to the nucleolus of Cdk7, a regulator of the Pol I-elongation factor TFIIH. Acts as a regulator of cell proliferation and tissue growth as part of the TORC1 and Myc signaling pathway in response to nutrients. Required in males for both germline stem cell (GSC) maintenance and early stages of germ cell differentiation of germ cell cysts. Not required for female germline stem cell (GSC) maintenance, but necessary to regulate germ cell differentiation and egg chamber development. In female somatic cells, required for follicle stem cell survival and maintenance. The chain is Periodic tryptophan protein 1 homolog from Drosophila melanogaster (Fruit fly).